The sequence spans 145 residues: D-aminoacyl-tRNA deacylase (145 aa).

The Gly-cisPro motif, important for rejection of L-amino acids signature appears at 137 to 138; sequence GP.

Belongs to the DTD family. Homodimer.

It is found in the cytoplasm. It carries out the reaction glycyl-tRNA(Ala) + H2O = tRNA(Ala) + glycine + H(+). It catalyses the reaction a D-aminoacyl-tRNA + H2O = a tRNA + a D-alpha-amino acid + H(+). Functionally, an aminoacyl-tRNA editing enzyme that deacylates mischarged D-aminoacyl-tRNAs. Also deacylates mischarged glycyl-tRNA(Ala), protecting cells against glycine mischarging by AlaRS. Acts via tRNA-based rather than protein-based catalysis; rejects L-amino acids rather than detecting D-amino acids in the active site. By recycling D-aminoacyl-tRNA to D-amino acids and free tRNA molecules, this enzyme counteracts the toxicity associated with the formation of D-aminoacyl-tRNA entities in vivo and helps enforce protein L-homochirality. This Proteus mirabilis (strain HI4320) protein is D-aminoacyl-tRNA deacylase.